Reading from the N-terminus, the 286-residue chain is Bifunctional protein FolD (286 aa).

NADP(+) is bound by residues 165–167 (GRS), Ser190, and Val231.

Belongs to the tetrahydrofolate dehydrogenase/cyclohydrolase family. Homodimer.

The enzyme catalyses (6R)-5,10-methylene-5,6,7,8-tetrahydrofolate + NADP(+) = (6R)-5,10-methenyltetrahydrofolate + NADPH. The catalysed reaction is (6R)-5,10-methenyltetrahydrofolate + H2O = (6R)-10-formyltetrahydrofolate + H(+). Its pathway is one-carbon metabolism; tetrahydrofolate interconversion. Functionally, catalyzes the oxidation of 5,10-methylenetetrahydrofolate to 5,10-methenyltetrahydrofolate and then the hydrolysis of 5,10-methenyltetrahydrofolate to 10-formyltetrahydrofolate. The chain is Bifunctional protein FolD from Bacillus cereus (strain ATCC 14579 / DSM 31 / CCUG 7414 / JCM 2152 / NBRC 15305 / NCIMB 9373 / NCTC 2599 / NRRL B-3711).